The primary structure comprises 75 residues: Cytoplasmic envelopment protein 3 (75 aa).

Gly-2 carries N-myristoyl glycine; by host lipidation. Positions 53 to 65 (EGLEYDEDSENDE) are enriched in acidic residues. The segment at 53 to 75 (EGLEYDEDSENDELLFLPNKKPN) is disordered.

Belongs to the herpesviridae cytoplasmic envelopment protein 3 family. As to quaternary structure, interacts with BGLF2; this interaction is essential for the proper localization of each protein to the assembly complex and thus for the production of infectious virus. In terms of processing, myristoylation and palmitoylation (probably on one or more of the nearby cysteines at the N-terminus) enable membrane-binding and Golgi apparatus-specific targeting and are essential for efficient packaging. Post-translationally, phosphorylated. Phosphorylation does not seem to be required for recycling to the host Golgi apparatus. Packaging is selective for underphosphorylated forms.

It is found in the virion tegument. It localises to the virion membrane. Its subcellular location is the host cell membrane. The protein localises to the host Golgi apparatus membrane. Functionally, plays an important role in the cytoplasmic envelopment of tegument proteins and capsids during the assembly and egress processes. Also participates in viral entry at the fusion step probably by regulating the core fusion machinery. The chain is Cytoplasmic envelopment protein 3 from Homo sapiens (Human).